The following is a 511-amino-acid chain: Trigger factor (511 aa).

A PPIase FKBP-type domain is found at 168–253 (GDLLTIDFVG…VKEVKAPAEV (86 aa)). Residues 446–511 (DEHEHHHHDH…KAPAKKKKED (66 aa)) form a disordered region. Positions 455–478 (HDHDHDHDHDHDHGHDHDHGDEKP) are enriched in basic and acidic residues. Residues 479–488 (KKKPAAKKAA) are compositionally biased toward basic residues. The span at 489–498 (AKSDDGEAKP) shows a compositional bias: basic and acidic residues. A compositionally biased stretch (basic residues) spans 499–511 (AAKKAPAKKKKED).

This sequence belongs to the FKBP-type PPIase family. Tig subfamily.

Its subcellular location is the cytoplasm. It catalyses the reaction [protein]-peptidylproline (omega=180) = [protein]-peptidylproline (omega=0). In terms of biological role, involved in protein export. Acts as a chaperone by maintaining the newly synthesized protein in an open conformation. Functions as a peptidyl-prolyl cis-trans isomerase. This chain is Trigger factor, found in Parvibaculum lavamentivorans (strain DS-1 / DSM 13023 / NCIMB 13966).